Here is a 449-residue protein sequence, read N- to C-terminus: Methylenetetrahydrofolate--tRNA-(uracil-5-)-methyltransferase TrmFO (449 aa).

9–14 (GGGIAG) provides a ligand contact to FAD.

The protein belongs to the MnmG family. TrmFO subfamily. FAD is required as a cofactor.

It is found in the cytoplasm. It carries out the reaction uridine(54) in tRNA + (6R)-5,10-methylene-5,6,7,8-tetrahydrofolate + NADH + H(+) = 5-methyluridine(54) in tRNA + (6S)-5,6,7,8-tetrahydrofolate + NAD(+). The catalysed reaction is uridine(54) in tRNA + (6R)-5,10-methylene-5,6,7,8-tetrahydrofolate + NADPH + H(+) = 5-methyluridine(54) in tRNA + (6S)-5,6,7,8-tetrahydrofolate + NADP(+). Functionally, catalyzes the folate-dependent formation of 5-methyl-uridine at position 54 (M-5-U54) in all tRNAs. The sequence is that of Methylenetetrahydrofolate--tRNA-(uracil-5-)-methyltransferase TrmFO from Gloeobacter violaceus (strain ATCC 29082 / PCC 7421).